A 188-amino-acid chain; its full sequence is Adenine phosphoribosyltransferase (188 aa).

Residue 134–138 (ATGGS) participates in AMP binding.

It belongs to the purine/pyrimidine phosphoribosyltransferase family. As to quaternary structure, homodimer. It depends on Mg(2+) as a cofactor.

The protein resides in the cytoplasm. It is found in the nucleus. It carries out the reaction AMP + diphosphate = 5-phospho-alpha-D-ribose 1-diphosphate + adenine. Its pathway is purine metabolism; AMP biosynthesis via salvage pathway; AMP from adenine: step 1/1. Functionally, catalyzes a salvage reaction resulting in the formation of AMP, that is energically less costly than de novo synthesis. The polypeptide is Adenine phosphoribosyltransferase (APT1) (Candida albicans (strain SC5314 / ATCC MYA-2876) (Yeast)).